We begin with the raw amino-acid sequence, 512 residues long: Amidase 2 (512 aa).

Catalysis depends on charge relay system residues K122 and S197. Residues S197 and 218–221 (IGGS) contribute to the substrate site. S221 (acyl-ester intermediate) is an active-site residue.

This sequence belongs to the amidase family.

It carries out the reaction a monocarboxylic acid amide + H2O = a monocarboxylate + NH4(+). Its pathway is xenobiotic degradation. Its function is as follows. Amidase; part of the Fusarium detoxification of benzoxazolinone cluster 2 (FDB2) involved in the degradation of benzoxazolinones produced by the host plant. Maize, wheat, and rye produce the 2 benzoxazinone phytoanticipins 2,4-dihy-droxy-7-methoxy-1,4-benzoxazin-3-one (DIMBOA) and 2,4-dihydroxy-1,4-benzoxazin-3-one (DIBOA) that, due to their inherent instability once released, spontaneously degrade to the more stable corresponding benzoxazolinones, 6-methoxy-2-benzoxazolinone (MBOA) and 2-benzoxazolinone (BOA), respectively. The first step in the detoxification of benzoxazolinones involves the hydrolysis of the cyclic ester bond of benzoxazolinones by the FDB1 cluster gamma-lactamase MBL1 to aminophenols. MBL1 is able to convert BOA into 2-aminophenol (2-AP), as well as MBOA into 5-methoxy-2-aminophenol (2-AMP). The FDB2 cluster N-malonyltransferase FDB2/NAT1 then metabolizes aminophenols via N-malonylation to non-toxic malonamic acids. FDB2/NAT1 converts 2-AP into N-(2-hydroxyphenyl) malonamic acid (HPMA) and 2-AMP into N-(2-hydroxy-4-methoxyphenyl) malonamic acid (HMPMA). The duplicated dienlactone hydrolases DLH1 and DLH2 may provide redundant function for hydrolyzing the lactone moiety in the BOA molecule. The roles of the amidases an other enzymes encoded by the 2 FDB clusters have not been identified so far. In Gibberella moniliformis (strain M3125 / FGSC 7600) (Maize ear and stalk rot fungus), this protein is Amidase 2.